A 261-amino-acid chain; its full sequence is Trifolitoxin immunity protein (261 aa).

Its function is as follows. Required for TFX resistance. This chain is Trifolitoxin immunity protein (tfxG), found in Rhizobium leguminosarum bv. trifolii.